We begin with the raw amino-acid sequence, 243 residues long: Complement C1q tumor necrosis factor-related protein 5 (243 aa).

Residues 1-15 (MRPLLVLLLLGLAAG) form the signal peptide. Residues 15-125 (GSPPLDDNKI…PPPSDAPLPF (111 aa)) form a disordered region. One can recognise a Collagen-like domain in the interval 30-95 (GHPGLPGTPG…AGPAGPTGPA (66 aa)). Positions 83–96 (RGEAGPAGPTGPAG) are enriched in low complexity. The C1q domain maps to 99–238 (SVPPRSAFSA…GFLVYSDWHS (140 aa)).

As to quaternary structure, may interact with ERFE. Homotrimer (via collagen-like domain). May form higher order oligomers by supercoiling of the trimers.

The protein localises to the secreted. This Homo sapiens (Human) protein is Complement C1q tumor necrosis factor-related protein 5 (C1QTNF5).